A 623-amino-acid polypeptide reads, in one-letter code: Glutathione import ATP-binding protein GsiA (623 aa).

ABC transporter domains are found at residues 15 to 269 (VSGL…QTLL) and 325 to 564 (LRSG…RKLM). ATP contacts are provided by residues 49–56 (GESGSGKS) and 357–364 (GESGSGKS).

The protein belongs to the ABC transporter superfamily. Glutathione importer (TC 3.A.1.5.11) family. In terms of assembly, the complex is composed of two ATP-binding proteins (GsiA), two transmembrane proteins (GsiC and GsiD) and a solute-binding protein (GsiB).

It localises to the cell inner membrane. The enzyme catalyses glutathione(out) + ATP + H2O = glutathione(in) + ADP + phosphate + H(+). Its function is as follows. Part of the ABC transporter complex GsiABCD involved in glutathione import. Responsible for energy coupling to the transport system. The polypeptide is Glutathione import ATP-binding protein GsiA (Salmonella typhi).